We begin with the raw amino-acid sequence, 315 residues long: Protoheme IX farnesyltransferase (315 aa).

Transmembrane regions (helical) follow at residues 32–52 (VMSL…GHMN), 53–73 (PVLA…SGAL), 93–113 (IPAG…LSAF), 120–140 (LMVN…YAVI), 153–173 (IVIG…AATG), 180–200 (LVLF…LSLF), 226–246 (ALFY…MGFA), 249–269 (FYGV…WRLW), and 295–315 (IFAV…FGVF).

It belongs to the UbiA prenyltransferase family. Protoheme IX farnesyltransferase subfamily.

The protein localises to the cell inner membrane. The enzyme catalyses heme b + (2E,6E)-farnesyl diphosphate + H2O = Fe(II)-heme o + diphosphate. It functions in the pathway porphyrin-containing compound metabolism; heme O biosynthesis; heme O from protoheme: step 1/1. Functionally, converts heme B (protoheme IX) to heme O by substitution of the vinyl group on carbon 2 of heme B porphyrin ring with a hydroxyethyl farnesyl side group. The protein is Protoheme IX farnesyltransferase of Brucella suis (strain ATCC 23445 / NCTC 10510).